The sequence spans 410 residues: Cell division protein FtsZ (410 aa).

Residues 22–26 (GGGGN), 109–111 (GTG), glutamate 140, arginine 144, and aspartate 188 contribute to the GTP site. The disordered stretch occupies residues 318 to 410 (ESKKDRKPHR…STPPFFRRKR (93 aa)). Residues 330–344 (RQAVQPMQQTTQSVE) show a composition bias toward polar residues. Basic and acidic residues predominate over residues 360–398 (WDIRREQNTRPKVDESSLEQVDKKEFDTFHREEPNHNDD).

Belongs to the FtsZ family. As to quaternary structure, homodimer. Polymerizes to form a dynamic ring structure in a strictly GTP-dependent manner. Interacts directly with several other division proteins.

The protein resides in the cytoplasm. Essential cell division protein that forms a contractile ring structure (Z ring) at the future cell division site. The regulation of the ring assembly controls the timing and the location of cell division. One of the functions of the FtsZ ring is to recruit other cell division proteins to the septum to produce a new cell wall between the dividing cells. Binds GTP and shows GTPase activity. This is Cell division protein FtsZ from Enterococcus faecalis (strain ATCC 700802 / V583).